A 451-amino-acid chain; its full sequence is Trigger factor (451 aa).

The PPIase FKBP-type domain maps to 162–243; that stretch reads GDYAIIDITT…VQQSKERKLP (82 aa).

Belongs to the FKBP-type PPIase family. Tig subfamily.

The protein localises to the cytoplasm. It catalyses the reaction [protein]-peptidylproline (omega=180) = [protein]-peptidylproline (omega=0). Involved in protein export. Acts as a chaperone by maintaining the newly synthesized protein in an open conformation. Functions as a peptidyl-prolyl cis-trans isomerase. The polypeptide is Trigger factor (Corynebacterium aurimucosum (strain ATCC 700975 / DSM 44827 / CIP 107346 / CN-1) (Corynebacterium nigricans)).